The primary structure comprises 412 residues: 43 kDa receptor-associated protein of the synapse (412 aa).

A lipid anchor (N-myristoyl glycine) is attached at glycine 2. 7 TPR repeats span residues 6–39 (TKQQ…SADP), 83–116 (TEGY…QGTT), 123–156 (GQVS…AHNN), 163–196 (CRVC…VNDY), 206–239 (AMSQ…ALQH), 246–279 (ALCL…MTEI), and 286–319 (IQVL…AEGL). A Phosphotyrosine modification is found at tyrosine 196. Residues 363 to 403 (CGMCGESIGEKNNQLQALPCSHFFHLKCLQTNGTRGCPNCR) form an RING-type zinc finger.

Belongs to the RAPsyn family. In terms of tissue distribution, expressed in muscle fibers and in neurons.

The protein localises to the cell membrane. The protein resides in the postsynaptic cell membrane. Its subcellular location is the cytoplasm. It is found in the cytoskeleton. In terms of biological role, postsynaptic protein required for clustering of nicotinic acetylcholine receptors (nAChRs) at the neuromuscular junction. It may link the receptor to the underlying postsynaptic cytoskeleton, possibly by direct association with actin or spectrin. The protein is 43 kDa receptor-associated protein of the synapse (RAPSN) of Gallus gallus (Chicken).